The sequence spans 275 residues: MATYFVGDLQGCYDELQLLLERVDFNPTQDKLYLVGDLVARGDKSLECLRFVKSLGNAAQTVLGNHDLHLIATALDIKKVKPRDRVDAIFNAPDFDELIHWLRHQPLLVHNEKLNFLMSHAGISPDWDLKTAKSCAAEVEQILQHGDFHYLIENMYSEQPDRWSPDLQGLARHRYIINAFTRMRFCYLDHRFDFACKSPLKDAPAELTPWFNLDNPLYKQIPIVFGHWASLVDEPTPKGIYALDTGCVWNNRMTMLRWEDKQFFTQSAVKNYSDF.

It belongs to the Ap4A hydrolase family.

The catalysed reaction is P(1),P(4)-bis(5'-adenosyl) tetraphosphate + H2O = 2 ADP + 2 H(+). In terms of biological role, hydrolyzes diadenosine 5',5'''-P1,P4-tetraphosphate to yield ADP. The protein is Bis(5'-nucleosyl)-tetraphosphatase, symmetrical (apaH) of Haemophilus influenzae (strain ATCC 51907 / DSM 11121 / KW20 / Rd).